A 56-amino-acid polypeptide reads, in one-letter code: Small ribosomal subunit protein uS14 (56 aa).

The residue at position 9 (Ser-9) is a Phosphoserine. Omega-N-methylarginine is present on Arg-12. Positions 21, 24, 39, and 42 each coordinate Zn(2+). Residue Lys-48 is modified to N6-acetyllysine.

Belongs to the universal ribosomal protein uS14 family. In terms of assembly, component of the 40S small ribosomal subunit. The cofactor is Zn(2+).

Its subcellular location is the cytoplasm. It is found in the cytosol. The protein resides in the rough endoplasmic reticulum. Its function is as follows. Component of the small ribosomal subunit. The ribosome is a large ribonucleoprotein complex responsible for the synthesis of proteins in the cell. The chain is Small ribosomal subunit protein uS14 (Rps29) from Mus musculus (Mouse).